Consider the following 259-residue polypeptide: Probable ABC transporter permease protein RF_0080 (259 aa).

Transmembrane regions (helical) follow at residues 13-35 (TIKF…SSII), 49-69 (LFIG…SGAV), 148-168 (VIAA…IGVM), 195-215 (PIDV…ISII), and 237-257 (AVVN…ELFF).

Belongs to the MlaE permease family.

The protein localises to the cell inner membrane. Functionally, could be part of an ABC transporter complex. The chain is Probable ABC transporter permease protein RF_0080 from Rickettsia felis (strain ATCC VR-1525 / URRWXCal2) (Rickettsia azadi).